A 432-amino-acid polypeptide reads, in one-letter code: D-amino acid dehydrogenase (432 aa).

3-17 (VVILGSGVVGVASAW) contacts FAD.

The protein belongs to the DadA oxidoreductase family. FAD is required as a cofactor.

The catalysed reaction is a D-alpha-amino acid + A + H2O = a 2-oxocarboxylate + AH2 + NH4(+). Its pathway is amino-acid degradation; D-alanine degradation; NH(3) and pyruvate from D-alanine: step 1/1. Its function is as follows. Oxidative deamination of D-amino acids. In Klebsiella pneumoniae (strain 342), this protein is D-amino acid dehydrogenase.